Consider the following 417-residue polypeptide: MGKFKINGGKRLYGEVEVHGAKNSILPILAATILNEGVSVIHNCPRLKDVDSMIEILEHIGCKVSFSGRDIVVDARDVKDSEIPDNLMRTMRSSIFLMGALIARNKKAFISFPGGCDIGHRPIDLHLKGLKKLGVEIEESYGYIRCKGVRVRGNEIHLDLPSVGATENIMLAATLADGITVIRNAAKEPEIEDLQNFLNSMGARITGAGTNTIVIEGVKKLHDTEYTIIPDRIVAGTYLCAAAMTRGELTVVKALKEHLEPLISKLKETGCELKTGNDYIKITCNKRPKAVDMIVTLPYPGFPTDLQPQIVSVLSIAEGTSIVTETIFDNRFKYTEELVRMGADIKVEGRVAVIRGVDKITGAKVLAKDLRGGVALVIAGLGAEGTTVVEGAEHIDRGYESLEKALKSVGADIVRIM.

Position 22–23 (22–23 (KN)) interacts with phosphoenolpyruvate. Residue Arg92 participates in UDP-N-acetyl-alpha-D-glucosamine binding. Residue Cys116 is the Proton donor of the active site. At Cys116 the chain carries 2-(S-cysteinyl)pyruvic acid O-phosphothioketal. UDP-N-acetyl-alpha-D-glucosamine is bound by residues 121 to 125 (RPIDL), Asp305, and Ile327.

The protein belongs to the EPSP synthase family. MurA subfamily.

It localises to the cytoplasm. The catalysed reaction is phosphoenolpyruvate + UDP-N-acetyl-alpha-D-glucosamine = UDP-N-acetyl-3-O-(1-carboxyvinyl)-alpha-D-glucosamine + phosphate. It functions in the pathway cell wall biogenesis; peptidoglycan biosynthesis. In terms of biological role, cell wall formation. Adds enolpyruvyl to UDP-N-acetylglucosamine. In Caldanaerobacter subterraneus subsp. tengcongensis (strain DSM 15242 / JCM 11007 / NBRC 100824 / MB4) (Thermoanaerobacter tengcongensis), this protein is UDP-N-acetylglucosamine 1-carboxyvinyltransferase 2.